The sequence spans 88 residues: Large ribosomal subunit protein bL31B (88 aa).

It belongs to the bacterial ribosomal protein bL31 family. Type B subfamily. Part of the 50S ribosomal subunit.

This is Large ribosomal subunit protein bL31B from Leuconostoc mesenteroides subsp. mesenteroides (strain ATCC 8293 / DSM 20343 / BCRC 11652 / CCM 1803 / JCM 6124 / NCDO 523 / NBRC 100496 / NCIMB 8023 / NCTC 12954 / NRRL B-1118 / 37Y).